Consider the following 327-residue polypeptide: DNA-directed RNA polymerase subunit alpha (327 aa).

Positions 1 to 233 (MVREKVKVST…NLFIPFLHVE (233 aa)) are alpha N-terminal domain (alpha-NTD). The segment at 267-327 (LAFQYIFIDQ…KKILDILEKK (61 aa)) is alpha C-terminal domain (alpha-CTD).

It belongs to the RNA polymerase alpha chain family. In terms of assembly, in plastids the minimal PEP RNA polymerase catalytic core is composed of four subunits: alpha, beta, beta', and beta''. When a (nuclear-encoded) sigma factor is associated with the core the holoenzyme is formed, which can initiate transcription.

The protein resides in the plastid. Its subcellular location is the chloroplast. The enzyme catalyses RNA(n) + a ribonucleoside 5'-triphosphate = RNA(n+1) + diphosphate. Functionally, DNA-dependent RNA polymerase catalyzes the transcription of DNA into RNA using the four ribonucleoside triphosphates as substrates. This Draba nemorosa (Woodland whitlowgrass) protein is DNA-directed RNA polymerase subunit alpha.